We begin with the raw amino-acid sequence, 882 residues long: Putative HTH-type transcriptional regulator Mb0914c (882 aa).

The HTH luxR-type domain occupies 814–879 (PARGWGSLTP…QLVDEAARRG (66 aa)). The H-T-H motif DNA-binding region spans 838–857 (NKDIAKRLFVSPRTVQTHLT).

The chain is Putative HTH-type transcriptional regulator Mb0914c from Mycobacterium bovis (strain ATCC BAA-935 / AF2122/97).